A 280-amino-acid polypeptide reads, in one-letter code: Clathrin adapter accessory protein LAA2 (280 aa).

A disordered region spans residues 1 to 26; that stretch reads MSDRDQIEPVTNALDAESDSSDDFGN. The short motif at 19-30 is the Ear-binding motif element; that stretch reads DSSDDFGNFSDA.

In terms of assembly, interacts with the clathrin-associated adapter complex AP-1. Interacts with LAA1.

It localises to the cytoplasmic vesicle. The protein resides in the clathrin-coated vesicle. Involved in localization of clathrin-associated adapter complex (AP-1) and subsequent AP-1-mediated clathrin-coated vesicle cargo loading. Directly mediates the interaction between LAA1 and AP-1 which is required for AP-1 localization. In complex with LAA1, cooperates with the small GTPase ARF1 and the phosphatidyl-inositol-4-phosphate (PI4P) synthesis to confer temporal specificity to AP-1 recruitment. The protein is Clathrin adapter accessory protein LAA2 of Saccharomyces cerevisiae (strain ATCC 204508 / S288c) (Baker's yeast).